Here is a 535-residue protein sequence, read N- to C-terminus: Alpha-1,3-mannosyl-glycoprotein 4-beta-N-acetylglucosaminyltransferase A (535 aa).

Over 1-6 the chain is Cytoplasmic; it reads MRLRNG. Residues 7 to 27 traverse the membrane as a helical; Signal-anchor for type II membrane protein segment; the sequence is TVATVLAFITSFLTLSWYTTW. Residues 28 to 535 lie on the Lumenal side of the membrane; the sequence is QNGKEKVIAY…NEIHIKKVTN (508 aa). Residues 31–57 adopt a coiled-coil conformation; the sequence is KEKVIAYQREFLALKERLRIAEHRISQ. 2 N-linked (GlcNAc...) asparagine glycosylation sites follow: Asn77 and Asn458. A Phosphoserine modification is found at Ser474.

Belongs to the glycosyltransferase 54 family. A divalent metal cation is required as a cofactor. Post-translationally, N-glycosylated. In terms of tissue distribution, highly expressed in small intestine, kidney, lung and spleen. Weakly expressed in brain, heart and liver.

Its subcellular location is the golgi apparatus membrane. It localises to the secreted. The catalysed reaction is N(4)-{beta-D-GlcNAc-(1-&gt;2)-alpha-D-Man-(1-&gt;3)-[beta-D-GlcNAc-(1-&gt;2)-alpha-D-Man-(1-&gt;6)]-beta-D-Man-(1-&gt;4)-beta-D-GlcNAc-(1-&gt;4)-beta-D-GlcNAc}-L-asparaginyl-[protein] + UDP-N-acetyl-alpha-D-glucosamine = N(4)-{beta-D-GlcNAc-(1-&gt;2)-[beta-D-GlcNAc-(1-&gt;4)]-alpha-D-Man-(1-&gt;3)-[beta-D-GlcNAc-(1-&gt;2)-alpha-D-Man-(1-&gt;6)]-beta-D-Man-(1-&gt;4)-beta-D-GlcNAc-(1-&gt;4)-beta-D-GlcNAc}-L-asparaginyl-[protein] + UDP + H(+). It catalyses the reaction an N(4)-{beta-D-GlcNAc-(1-&gt;2)-alpha-D-Man-(1-&gt;3)-[alpha-D-Man-(1-&gt;6)]-beta-D-Man-(1-&gt;4)-beta-D-GlcNAc-(1-&gt;4)-beta-D-GlcNAc}-L-asparaginyl-[protein] + UDP-N-acetyl-alpha-D-glucosamine = an N(4)-{beta-D-GlcNAc-(1-&gt;2)-[beta-D-GlcNAc-(1-&gt;4)]-alpha-D-Man-(1-&gt;3)-[alpha-D-Man-(1-&gt;6)]-beta-D-Man-(1-&gt;4)-beta-D-GlcNAc-(1-&gt;4)-beta-D-GlcNAc}-L-asparaginyl-[protein] + UDP + H(+). It carries out the reaction an N(4)-{beta-D-GlcNAc-(1-&gt;2)-alpha-D-Man-(1-&gt;3)-[beta-D-GlcNAc-(1-&gt;2)-[beta-D-GlcNAc-(1-&gt;6)]-alpha-D-Man-(1-&gt;6)]-beta-D-Man-(1-&gt;4)-beta-D-GlcNAc-(1-&gt;4)-beta-D-GlcNAc}-L-asparaginyl-[protein] + UDP-N-acetyl-alpha-D-glucosamine = an N(4)-{beta-D-GlcNAc-(1-&gt;2)-[beta-D-GlcNAc-(1-&gt;4)]-alpha-D-Man-(1-&gt;3)-[beta-D-GlcNAc-(1-&gt;2)-[beta-D-GlcNAc-(1-&gt;6)]-alpha-D-Man-(1-&gt;6)]-beta-D-Man-(1-&gt;4)-beta-D-GlcNAc-(1-&gt;4)-beta-D-GlcNAc}-L-asparaginyl-[protein] + UDP + H(+). The enzyme catalyses an N(4)-{beta-D-GlcNAc-(1-&gt;2)-alpha-D-Man-(1-&gt;3)-[beta-D-GlcNAc-(1-&gt;2)-alpha-D-Man-(1-&gt;6)]-beta-D-Man-(1-&gt;4)-beta-D-GlcNAc-(1-&gt;4)-[alpha-L-Fuc-(1-&gt;6)]-beta-D-GlcNAc}-L-asparaginyl-[protein] + UDP-N-acetyl-alpha-D-glucosamine = N(4)-{beta-D-GlcNAc-(1-&gt;2)-[beta-D-GlcNAc-(1-&gt;4)]-alpha-D-Man-(1-&gt;3)-[beta-D-GlcNAc-(1-&gt;2)-alpha-D-Man-(1-&gt;6)]-beta-D-Man-(1-&gt;4)-beta-D-GlcNAc-(1-&gt;4)-[alpha-L-Fuc-(1-&gt;6)]-beta-D-GlcNAc}-asparaginyl-[protein] + UDP + H(+). The catalysed reaction is an N(4)-{beta-D-GlcNAc-(1-&gt;2)-alpha-D-Man-(1-&gt;3)-[beta-D-Gal-(1-&gt;4)-beta-D-GlcNAc-(1-&gt;2)-alpha-D-Man-(1-&gt;6)]-beta-D-Man-(1-&gt;4)-beta-D-GlcNAc-(1-&gt;4)-beta-D-GlcNAc}-L-asparaginyl-[protein] + UDP-N-acetyl-alpha-D-glucosamine = an N(4)-{beta-D-GlcNAc-(1-&gt;2)-[beta-D-GlcNAc-(1-&gt;4)]-alpha-D-Man-(1-&gt;3)-[beta-D-Gal-(1-&gt;4)-beta-D-GlcNAc-(1-&gt;2)-alpha-D-Man-(1-&gt;6)]-beta-D-Man-(1-&gt;4)-beta-D-GlcNAc-(1-&gt;4)-beta-D-GlcNAc}-L-asparaginyl-[protein] + UDP + H(+). It catalyses the reaction N(4)-{beta-D-GlcNAc-(1-&gt;2)-alpha-D-Man-(1-&gt;3)-[alpha-D-Man-(1-&gt;3)-{alpha-D-Man-(1-&gt;6)}-alpha-D-Man-(1-&gt;6)]-beta-D-Man-(1-&gt;4)-beta-D-GlcNAc-(1-&gt;4)-beta-D-GlcNAc}-asparaginyl-[protein] + UDP-N-acetyl-alpha-D-glucosamine = N(4)-{beta-D-GlcNAc-(1-&gt;2)-[beta-D-GlcNAc-(1-&gt;4)]-alpha-D-Man-(1-&gt;3)-[alpha-D-Man-(1-&gt;3)-{alpha-D-Man-(1-&gt;6)}-alpha-D-Man-(1-&gt;6)]-beta-D-Man-(1-&gt;4)-beta-D-GlcNAc-(1-&gt;4)-beta-D-GlcNAc}-asparaginyl-[protein] + UDP + H(+). It carries out the reaction N(4)-{beta-D-GlcNAc-(1-&gt;2)-alpha-D-Man-(1-&gt;3)-beta-D-Man-(1-&gt;4)-beta-D-GlcNAc-(1-&gt;4)-beta-D-GlcNAc}-asparaginyl-[protein] + UDP-N-acetyl-alpha-D-glucosamine = N(4)-{beta-D-GlcNAc-(1-&gt;2)-[beta-D-GlcNAc-(1-&gt;4)]-alpha-D-Man-(1-&gt;3)-beta-D-Man-(1-&gt;4)-beta-D-GlcNAc-(1-&gt;4)-beta-D-GlcNAc}-asparaginyl-[protein] + UDP + H(+). The protein operates within protein modification; protein glycosylation. Inhibited by UDP. Its function is as follows. Glycosyltransferase that catalyze the transfer of GlcNAc from UDP-GlcNAc to the GlcNAcbeta1-2Manalpha1-3 arm of the core structure of N-linked glycans through a beta1-4 linkage and participates in the production of tri- and tetra-antennary N-linked sugar chains. Involved in glucose transport by mediating SLC2A2/GLUT2 glycosylation, thereby controlling cell-surface expression of SLC2A2 in pancreatic beta cells. This chain is Alpha-1,3-mannosyl-glycoprotein 4-beta-N-acetylglucosaminyltransferase A, found in Bos taurus (Bovine).